We begin with the raw amino-acid sequence, 289 residues long: Movement protein (289 aa).

Belongs to the ilarvirus movement protein family.

Its subcellular location is the host cell junction. It localises to the host plasmodesma. Transports viral genome to neighboring plant cells directly through plasmosdesmata, without any budding. The movement protein allows efficient cell to cell propagation, by bypassing the host cell wall barrier. Acts by forming a tubular structure at the host plasmodesmata, enlarging it enough to allow free passage of virion capsids. In Tobacco streak virus (strain WC) (TSV), this protein is Movement protein.